We begin with the raw amino-acid sequence, 402 residues long: Multidrug resistance protein MdtH (402 aa).

The Cytoplasmic portion of the chain corresponds to 1-12 (MSRVSQARNLGK). The chain crosses the membrane as a helical span at residues 13-33 (YFLLIDNMLVVLGFFVVFPLI). Residues 34–98 (SIRFVDQMGW…GFATMGIAHE (65 aa)) are Periplasmic-facing. A helical membrane pass occupies residues 99–116 (PWLLWFSCLLSGLGGTLF). The Cytoplasmic segment spans residues 117–138 (DPPRSALVVKLIRPQQRGRFFS). The chain crosses the membrane as a helical span at residues 139-159 (LLMMQDSAGAVIGALLGSWLL). The Periplasmic portion of the chain corresponds to 160–164 (QYDFR). The chain crosses the membrane as a helical span at residues 165-185 (LVCATGAVLFVLCAAFNAWLL). The Cytoplasmic segment spans residues 186-213 (PAWKLSTVRTPVREGMTRVMRDKRFVTY). The chain crosses the membrane as a helical span at residues 214-234 (VLTLAGYYMLAVQVMLMLPIM). Residues 235 to 243 (VNDVAGAPS) are Periplasmic-facing. A helical transmembrane segment spans residues 244–264 (AVKWMYAIEACLSLTLLYPIA). The Cytoplasmic segment spans residues 265 to 276 (RWSEKHFRLEHR). Residues 277–297 (LMAGLLIMSLSMMPVGMVSGL) form a helical membrane-spanning segment. At 298 to 299 (QQ) the chain is on the periplasmic side. The helical transmembrane segment at 300-320 (LFTLICLFYIGSIIAEPARET) threads the bilayer. Topologically, residues 321 to 339 (LSASLADARARGSYMGFSR) are cytoplasmic. A helical transmembrane segment spans residues 340-360 (LGLAIGGAIGYIGGGWLFDLG). The Periplasmic portion of the chain corresponds to 361–367 (KSAHQPE). Residues 368–388 (LPWMMLGIIGIFTFLALGWQF) traverse the membrane as a helical segment. Residues 389 to 402 (SQKRAARRLLERDA) are Cytoplasmic-facing.

Belongs to the major facilitator superfamily. DHA1 family. MdtH (TC 2.A.1.2.21) subfamily.

It localises to the cell inner membrane. Its function is as follows. Confers resistance to norfloxacin and enoxacin. This is Multidrug resistance protein MdtH from Escherichia coli O139:H28 (strain E24377A / ETEC).